The primary structure comprises 72 residues: MSFFKLYEIKKKYVNNNYNNNNNNNNNNNNNNNNNNNNNNNNNNININNNNNNNNNNNNNNNNIEIIILLLL.

The tract at residues 15–62 (NNNYNNNNNNNNNNNNNNNNNNNNNNNNNNININNNNNNNNNNNNNNN) is disordered.

This is an uncharacterized protein from Dictyostelium discoideum (Social amoeba).